We begin with the raw amino-acid sequence, 210 residues long: HTH-type transcriptional regulator MtrR (210 aa).

One can recognise an HTH tetR-type domain in the interval 9–69; that stretch reads LKTKEHLMLA…ALFQRICDDI (61 aa). A DNA-binding region (H-T-H motif) is located at residues 32–51; that stretch reads SLNEIAQAAGVTRGALYWHF.

Homodimer. Binds to DNA as a pair of dimers.

DNA binding is affected significantly by increasing the NaCl concentration. Its function is as follows. Controls the permeability of the cell envelope to hydrophobic compounds such as antibiotics and detergents. Represses transcription of the mtrCDE-encoded efflux pump by binding within the mtrCDE promoter. Also negatively regulates the expression of farR, by binding to its promoter region, leading indirectly to the positive regulation of expression of the farAB-encoded efflux pump. The sequence is that of HTH-type transcriptional regulator MtrR from Neisseria gonorrhoeae.